A 247-amino-acid polypeptide reads, in one-letter code: 2,3-bisphosphoglycerate-dependent phosphoglycerate mutase (247 aa).

Substrate-binding positions include 8–15, 21–22, Arg60, 87–90, Lys98, 114–115, and 183–184; these read RHGESVWN, TG, ERHY, RR, and GN. His9 serves as the catalytic Tele-phosphohistidine intermediate. Glu87 acts as the Proton donor/acceptor in catalysis.

The protein belongs to the phosphoglycerate mutase family. BPG-dependent PGAM subfamily. Homodimer.

It carries out the reaction (2R)-2-phosphoglycerate = (2R)-3-phosphoglycerate. It functions in the pathway carbohydrate degradation; glycolysis; pyruvate from D-glyceraldehyde 3-phosphate: step 3/5. In terms of biological role, catalyzes the interconversion of 2-phosphoglycerate and 3-phosphoglycerate. This is 2,3-bisphosphoglycerate-dependent phosphoglycerate mutase from Geobacter sulfurreducens (strain ATCC 51573 / DSM 12127 / PCA).